A 339-amino-acid chain; its full sequence is MIFIDACFRKETPYTPIWMMRQAGRYLSEYQESRKKAGSFLELCKNSDLATEVTLQPVEILGVDAAILFSDILVVPLEMGLNLEFIPKKGPHFLETITDLKSVESLKIEAYKQLNYVYDTISQTRQKLSKEKALIGFCGSPWTLATYMIEGEGSKSYAKSKKMLYSEPEVLKALLEKLSLELIEYLSLQIQAGVNAVMIFDSWASALEKEAYLKFSWDYLKKISKELKKRYAHIPVILFPKGIGAYLDSIDGEFDVFGVDWGTPLEVAKKILGDKYVLQGNLEPTRLYDKNALEEGVERILKVMGNQGHIFNLGHGMLPDLPRENAKYLVQLVHAKTRR.

Residues 21-25 (RQAGR), Asp-71, Tyr-147, Ser-202, and His-315 contribute to the substrate site.

Belongs to the uroporphyrinogen decarboxylase family. In terms of assembly, homodimer.

The protein localises to the cytoplasm. The catalysed reaction is uroporphyrinogen III + 4 H(+) = coproporphyrinogen III + 4 CO2. It functions in the pathway porphyrin-containing compound metabolism; protoporphyrin-IX biosynthesis; coproporphyrinogen-III from 5-aminolevulinate: step 4/4. Functionally, catalyzes the decarboxylation of four acetate groups of uroporphyrinogen-III to yield coproporphyrinogen-III. In Helicobacter pylori (strain Shi470), this protein is Uroporphyrinogen decarboxylase.